Consider the following 231-residue polypeptide: AA9 family lytic polysaccharide monooxygenase F (231 aa).

An N-terminal signal peptide occupies residues 1-17 (MLPSISLLLAAALGTSA). 3 residues coordinate Cu(2+): histidine 18, aspartate 50, and histidine 89. O2 is bound at residue aspartate 50. Intrachain disulfides connect cysteine 59-cysteine 177 and cysteine 147-cysteine 231. Residues histidine 163 and glutamine 172 each contribute to the O2 site. Tyrosine 174 contacts Cu(2+).

The protein belongs to the polysaccharide monooxygenase AA9 family. Cu(2+) serves as cofactor.

The protein localises to the secreted. It carries out the reaction [(1-&gt;4)-beta-D-glucosyl]n+m + reduced acceptor + O2 = 4-dehydro-beta-D-glucosyl-[(1-&gt;4)-beta-D-glucosyl]n-1 + [(1-&gt;4)-beta-D-glucosyl]m + acceptor + H2O.. Its function is as follows. Lytic polysaccharide monooxygenase (LPMO) that depolymerizes crystalline and amorphous polysaccharides via the oxidation of scissile alpha- or beta-(1-4)-glycosidic bonds, yielding C1 oxidation products. Catalysis by LPMOs requires the reduction of the active-site copper from Cu(II) to Cu(I) by a reducing agent and H(2)O(2) or O(2) as a cosubstrate. In Neurospora crassa (strain ATCC 24698 / 74-OR23-1A / CBS 708.71 / DSM 1257 / FGSC 987), this protein is AA9 family lytic polysaccharide monooxygenase F (gh61-6).